Reading from the N-terminus, the 103-residue chain is Muscarinic toxin BM14 (103 aa).

A signal peptide spans 1-21; sequence MKTLLLTLVVVTIICLDLGYT. 5 disulfide bridges follow: Cys-24–Cys-45, Cys-27–Cys-37, Cys-38–Cys-72, Cys-76–Cys-90, and Cys-91–Cys-96.

This sequence belongs to the three-finger toxin family. Ancestral subfamily. Orphan group XVII sub-subfamily. Expressed by the venom gland.

The protein localises to the secreted. Its function is as follows. This toxin inhibits the binding of [3H]quinuclidinyl benzilate to the M2 muscarinic acetylcholine (mAchR) receptor subtype (CHRM2). The chain is Muscarinic toxin BM14 from Bungarus multicinctus (Many-banded krait).